A 593-amino-acid chain; its full sequence is Probable tripeptidyl-peptidase SED3 (593 aa).

A signal peptide spans 1-18 (MLLRWHSVIPLFLTMTVA). Positions 19–198 (LPNTYRTVVE…SLQVIYSSTN (180 aa)) are cleaved as a propeptide — removed in mature form. N-linked (GlcNAc...) asparagine glycosylation is found at Asn-198, Asn-204, Asn-261, and Asn-275. A Peptidase S53 domain is found at 206-592 (TITPRCLREL…RILAKIVQHM (387 aa)). Catalysis depends on charge relay system residues Glu-282 and Asp-286. N-linked (GlcNAc...) asparagine glycosylation is present at Asn-295. Ser-496 (charge relay system) is an active-site residue. The Ca(2+) site is built by Asp-538 and Ile-539. 2 N-linked (GlcNAc...) asparagine glycosylation sites follow: Asn-554 and Asn-566. Ca(2+) is bound by residues Gly-570 and Asp-572.

The cofactor is Ca(2+).

The protein localises to the secreted. The protein resides in the extracellular space. The catalysed reaction is Release of an N-terminal tripeptide from a polypeptide.. Functionally, secreted tripeptidyl-peptidase which degrades proteins at acidic pHs and is involved in virulence. The polypeptide is Probable tripeptidyl-peptidase SED3 (SED3) (Trichophyton verrucosum (strain HKI 0517)).